The following is a 492-amino-acid chain: Glutamate--cysteine ligase A, chloroplastic (492 aa).

A disulfide bridge links C156 with C376.

This sequence belongs to the carboxylate-amine ligase family. Glutamate--cysteine ligase type 2 subfamily. In terms of assembly, homodimer or monomer when oxidized or reduced, respectively. The Cys-156-Cys-376 disulfide bridge is known to modulate the enzyme activity according to the redox status. The oxidized form constitutes the active enzyme.

Its subcellular location is the plastid. The protein resides in the chloroplast. It catalyses the reaction L-cysteine + L-glutamate + ATP = gamma-L-glutamyl-L-cysteine + ADP + phosphate + H(+). It participates in sulfur metabolism; glutathione biosynthesis; glutathione from L-cysteine and L-glutamate: step 1/2. The sequence is that of Glutamate--cysteine ligase A, chloroplastic (GSH1-1) from Oryza sativa subsp. japonica (Rice).